A 241-amino-acid polypeptide reads, in one-letter code: Tryptophan synthase alpha chain (241 aa).

Residues E31 and D42 each act as proton acceptor in the active site.

The protein belongs to the TrpA family. Tetramer of two alpha and two beta chains.

It carries out the reaction (1S,2R)-1-C-(indol-3-yl)glycerol 3-phosphate + L-serine = D-glyceraldehyde 3-phosphate + L-tryptophan + H2O. The protein operates within amino-acid biosynthesis; L-tryptophan biosynthesis; L-tryptophan from chorismate: step 5/5. In terms of biological role, the alpha subunit is responsible for the aldol cleavage of indoleglycerol phosphate to indole and glyceraldehyde 3-phosphate. This chain is Tryptophan synthase alpha chain, found in Staphylococcus saprophyticus subsp. saprophyticus (strain ATCC 15305 / DSM 20229 / NCIMB 8711 / NCTC 7292 / S-41).